Reading from the N-terminus, the 337-residue chain is Junctional sarcoplasmic reticulum protein 1 (337 aa).

The segment at 1–84 is mediates interaction with CACNA1S; it reads MATRAMEELD…EKEPVSKVTS (84 aa). Disordered stretches follow at residues 23–125 and 159–337; these read SALA…ELPW and EAPA…KGRD. Composition is skewed to basic and acidic residues over residues 49-59 and 69-79; these read SRSHDSQERVT and TKPKKMEKEPV. The segment covering 165–180 has biased composition (low complexity); the sequence is PESWASSSSSPKGPAS. Positions 199–213 are enriched in basic and acidic residues; that stretch reads SKLEERVQIPRSEEA. Over residues 214 to 225 the composition is skewed to acidic residues; the sequence is AEKDEWESEEAA. 3 stretches are compositionally biased toward basic and acidic residues: residues 236 to 277, 285 to 309, and 316 to 325; these read GPKE…RGAR, RRWE…DRKR, and RRPDEEDRPL. A compositionally biased stretch (basic residues) spans 326–337; that stretch reads GRQKRRAGKGRD.

As to quaternary structure, interacts with CACNA1S, CACNB1 and calsequestrin.

The protein resides in the sarcoplasmic reticulum membrane. It is found in the endoplasmic reticulum membrane. Functionally, involved in skeletal muscle excitation/contraction coupling (EC), probably acting as a regulator of the voltage-sensitive calcium channel CACNA1S. EC is a physiological process whereby an electrical signal (depolarization of the plasma membrane) is converted into a chemical signal, a calcium gradient, by the opening of ryanodine receptor calcium release channels. May regulate CACNA1S membrane targeting and activity. This is Junctional sarcoplasmic reticulum protein 1 (JSRP1) from Bos taurus (Bovine).